A 209-amino-acid polypeptide reads, in one-letter code: Thymidylate kinase (209 aa).

10-17 (GLDGAGKS) serves as a coordination point for ATP.

The protein belongs to the thymidylate kinase family.

The enzyme catalyses dTMP + ATP = dTDP + ADP. Phosphorylation of dTMP to form dTDP in both de novo and salvage pathways of dTTP synthesis. This Francisella tularensis subsp. holarctica (strain FTNF002-00 / FTA) protein is Thymidylate kinase.